The chain runs to 273 residues: 3-methyl-2-oxobutanoate hydroxymethyltransferase (273 aa).

Residues aspartate 49 and aspartate 88 each contribute to the Mg(2+) site. Residues aspartate 49–serine 50, aspartate 88, and lysine 118 each bind 3-methyl-2-oxobutanoate. Mg(2+) is bound at residue glutamate 120. The active-site Proton acceptor is the glutamate 187.

It belongs to the PanB family. In terms of assembly, homodecamer; pentamer of dimers. It depends on Mg(2+) as a cofactor.

The protein localises to the cytoplasm. It carries out the reaction 3-methyl-2-oxobutanoate + (6R)-5,10-methylene-5,6,7,8-tetrahydrofolate + H2O = 2-dehydropantoate + (6S)-5,6,7,8-tetrahydrofolate. It participates in cofactor biosynthesis; (R)-pantothenate biosynthesis; (R)-pantoate from 3-methyl-2-oxobutanoate: step 1/2. Catalyzes the reversible reaction in which hydroxymethyl group from 5,10-methylenetetrahydrofolate is transferred onto alpha-ketoisovalerate to form ketopantoate. This is 3-methyl-2-oxobutanoate hydroxymethyltransferase from Rhizobium rhizogenes (strain K84 / ATCC BAA-868) (Agrobacterium radiobacter).